A 503-amino-acid polypeptide reads, in one-letter code: Probable folate-biopterin transporter 6 (503 aa).

12 helical membrane-spanning segments follow: residues 56-76 (SFVLGVVLVYGVNQGFSGSIF), 101-121 (LYYIPWVMRPIWGLFTDVFPI), 128-148 (PYFVVSGVLGLVSAIAIVVLG), 153-173 (ALALSCLLGVSAAMAIADVVI), 194-214 (LCMVCSSAGALVGYATSGVFV), 221-241 (GALGVLAFSPATIVILGFFIY), 281-301 (LYMFISLALNISTHEGHFYWY), 314-334 (FVGIIYAVGALASMFGVLIYH), 344-364 (NILFFAQLLYVFSGMLDLVFI), 369-389 (LTLGIPDSLFVITEESFTKMI), 404-424 (LCPLGIEGTFFAFLMCIDSFG), and 450-470 (WLVILIRNILRLVTVCFVFLV).

Belongs to the major facilitator superfamily. Folate-biopterin transporter (TC 2.A.71) family.

The protein resides in the membrane. In terms of biological role, could mediate folate transport. In Arabidopsis thaliana (Mouse-ear cress), this protein is Probable folate-biopterin transporter 6.